The primary structure comprises 110 residues: Large ribosomal subunit protein uL22 (110 aa).

This sequence belongs to the universal ribosomal protein uL22 family. Part of the 50S ribosomal subunit.

In terms of biological role, this protein binds specifically to 23S rRNA; its binding is stimulated by other ribosomal proteins, e.g. L4, L17, and L20. It is important during the early stages of 50S assembly. It makes multiple contacts with different domains of the 23S rRNA in the assembled 50S subunit and ribosome. Its function is as follows. The globular domain of the protein is located near the polypeptide exit tunnel on the outside of the subunit, while an extended beta-hairpin is found that lines the wall of the exit tunnel in the center of the 70S ribosome. This chain is Large ribosomal subunit protein uL22, found in Desulfotalea psychrophila (strain LSv54 / DSM 12343).